The chain runs to 260 residues: Proliferating cell nuclear antigen (260 aa).

Residues 61-80 (RCDRNLSMGMNLGSMAKILK) mediate DNA binding.

Belongs to the PCNA family. In terms of assembly, homotrimer. Forms a complex with activator 1 heteropentamer in the presence of ATP. Interacts with E2f. Interacts with the catalytic subunits of two DNA polymerase complexes: PolD1 from the delta complex and PolE1/DNApol-epsilon255 from the epsilon complex. Expressed at high levels in adult ovary.

Its subcellular location is the nucleus. It is found in the chromosome. The protein localises to the cytoplasm. Functionally, likely to be an auxiliary protein of DNA polymerase delta complex and is probably involved in the control of DNA replication and repair by increasing the polymerase's processibility. This Drosophila melanogaster (Fruit fly) protein is Proliferating cell nuclear antigen.